We begin with the raw amino-acid sequence, 64 residues long: MNIRKNSKSVSKRFKVTSNKLILYKPASKSHLQEKKTVSRKKRLCRVKRIKVVDSKSIKLRYMF.

This sequence belongs to the bacterial ribosomal protein bL35 family.

It localises to the plastid. It is found in the chloroplast. This is Large ribosomal subunit protein bL35c from Cyanidium caldarium (Red alga).